Here is a 245-residue protein sequence, read N- to C-terminus: Pyridoxine 5'-phosphate synthase (245 aa).

Residue Asn-7 participates in 3-amino-2-oxopropyl phosphate binding. Residue 9 to 10 (DH) participates in 1-deoxy-D-xylulose 5-phosphate binding. A 3-amino-2-oxopropyl phosphate-binding site is contributed by Arg-18. Catalysis depends on His-43, which acts as the Proton acceptor. 1-deoxy-D-xylulose 5-phosphate is bound by residues Arg-45 and His-50. Glu-70 serves as the catalytic Proton acceptor. Thr-100 contributes to the 1-deoxy-D-xylulose 5-phosphate binding site. The active-site Proton donor is the His-190. 3-amino-2-oxopropyl phosphate is bound by residues Gly-191 and 212-213 (GH).

It belongs to the PNP synthase family. In terms of assembly, homooctamer; tetramer of dimers.

The protein localises to the cytoplasm. It catalyses the reaction 3-amino-2-oxopropyl phosphate + 1-deoxy-D-xylulose 5-phosphate = pyridoxine 5'-phosphate + phosphate + 2 H2O + H(+). Its pathway is cofactor biosynthesis; pyridoxine 5'-phosphate biosynthesis; pyridoxine 5'-phosphate from D-erythrose 4-phosphate: step 5/5. In terms of biological role, catalyzes the complicated ring closure reaction between the two acyclic compounds 1-deoxy-D-xylulose-5-phosphate (DXP) and 3-amino-2-oxopropyl phosphate (1-amino-acetone-3-phosphate or AAP) to form pyridoxine 5'-phosphate (PNP) and inorganic phosphate. This chain is Pyridoxine 5'-phosphate synthase, found in Prochlorococcus marinus (strain MIT 9313).